The primary structure comprises 281 residues: NADH--cytochrome b5 reductase 1 (281 aa).

Residues 13-33 (ILLGVFVAFVAVGAGAAYFLT) traverse the membrane as a helical segment. The AKR2A-binding sequence (ABS) required for mitochondrion outer membrane targeting signature appears at 34–40 (SSKKRRV). In terms of domain architecture, FAD-binding FR-type spans 45–149 (ENFKEFKLVK…KGPKGRFKYQ (105 aa)). FAD-binding positions include 129–144 (REMR…GPKG) and 155–187 (AFGM…KVHL). Thr-166 is subject to Phosphothreonine.

It belongs to the flavoprotein pyridine nucleotide cytochrome reductase family. As to quaternary structure, monomer. Interacts with AKR2A. The cofactor is FAD. As to expression, expressed in roots, stems, flowers and siliques. Detected in leaves.

The protein resides in the mitochondrion outer membrane. It carries out the reaction 2 Fe(III)-[cytochrome b5] + NADH = 2 Fe(II)-[cytochrome b5] + NAD(+) + H(+). Reductase transferring electrons from NADH to cytochrome b5. Required for the NADH-dependent electron transfer involved in the desaturation and hydroxylation of fatty acids and in the desaturation of sterol precursors. No activity with NADPH as electron donor. This chain is NADH--cytochrome b5 reductase 1, found in Arabidopsis thaliana (Mouse-ear cress).